An 88-amino-acid chain; its full sequence is Apolipoprotein C-I (88 aa).

A signal peptide spans 1 to 26; the sequence is MRLFISLPILIVVLAMALEGPAPAQA.

It belongs to the apolipoprotein C1 family.

The protein resides in the secreted. In terms of biological role, inhibitor of lipoprotein binding to the low density lipoprotein (LDL) receptor, LDL receptor-related protein, and very low density lipoprotein (VLDL) receptor. Associates with high density lipoproteins (HDL) and the triacylglycerol-rich lipoproteins in the plasma and makes up about 10% of the protein of the VLDL and 2% of that of HDL. Appears to interfere directly with fatty acid uptake and is also the major plasma inhibitor of cholesteryl ester transfer protein (CETP). Modulates the interaction of APOE with beta-migrating VLDL and inhibits binding of beta-VLDL to the LDL receptor-related protein. Binds free fatty acids and reduces their intracellular esterification. This is Apolipoprotein C-I (Apoc1) from Neotoma lepida (Desert woodrat).